A 280-amino-acid chain; its full sequence is Formyltetrahydrofolate deformylase (280 aa).

Residues 8-86 (VLRTICPDQK…RELNPAGRRR (79 aa)) enclose the ACT domain. Asp225 is a catalytic residue.

The protein belongs to the PurU family. As to quaternary structure, homohexamer.

The catalysed reaction is (6R)-10-formyltetrahydrofolate + H2O = (6S)-5,6,7,8-tetrahydrofolate + formate + H(+). Its pathway is purine metabolism; IMP biosynthesis via de novo pathway; formate from 10-formyl-5,6,7,8-tetrahydrofolate: step 1/1. With respect to regulation, activated by methionine, inhibited by glycine. In terms of biological role, catalyzes the hydrolysis of 10-formyltetrahydrofolate (formyl-FH4) to formate and tetrahydrofolate (FH4). Provides the major source of formate for the PurT-dependent synthesis of 5'-phosphoribosyl-N-formylglycinamide (FGAR) during aerobic growth. Has a role in regulating the one-carbon pool. The chain is Formyltetrahydrofolate deformylase from Escherichia coli (strain K12).